The primary structure comprises 240 residues: Probable transcriptional regulatory protein MXAN_7062 (240 aa).

This sequence belongs to the TACO1 family.

Its subcellular location is the cytoplasm. The polypeptide is Probable transcriptional regulatory protein MXAN_7062 (Myxococcus xanthus (strain DK1622)).